The following is a 399-amino-acid chain: Methylthioribose kinase (399 aa).

ATP is bound by residues Asn40, Lys57, and Glu111–Leu113. Asp229 lines the substrate pocket. Asp246–Glu248 contacts ATP. Arg344 is a substrate binding site.

This sequence belongs to the methylthioribose kinase family. Homodimer.

The catalysed reaction is 5-(methylsulfanyl)-D-ribose + ATP = 5-(methylsulfanyl)-alpha-D-ribose 1-phosphate + ADP + H(+). It functions in the pathway amino-acid biosynthesis; L-methionine biosynthesis via salvage pathway; S-methyl-5-thio-alpha-D-ribose 1-phosphate from S-methyl-5'-thioadenosine (hydrolase route): step 2/2. Its function is as follows. Catalyzes the phosphorylation of methylthioribose into methylthioribose-1-phosphate. This Klebsiella pneumoniae subsp. pneumoniae (strain ATCC 700721 / MGH 78578) protein is Methylthioribose kinase.